A 725-amino-acid chain; its full sequence is Sesterterpene synthase btcA (725 aa).

The terpene cyclase stretch occupies residues 1–333 (MANPPVTEWK…CANCPRHHAW (333 aa)). Residue D100 participates in Mg(2+) binding. Residues D100, N236, 240 to 244 (SWGRE), and 329 to 330 (RH) each bind substrate. Positions 100 to 104 (DDATE) match the DDXXD 1 motif. The short motif at 236-244 (NDYWSWGRE) is the NSE/DTE element. The tract at residues 334-722 (KEQDQAVHAV…MLYVLLQTLS (389 aa)) is prenyltransferase. The segment at 352–426 (VEAQSPSSAT…PSSLHLLKSP (75 aa)) is disordered. The span at 355–364 (QSPSSATHTA) shows a compositional bias: polar residues. Low complexity predominate over residues 375–419 (APSPISSPSSSSSAKPSSSSAADSSSCTSTSQHSPSETDSTPPSS). Isopentenyl diphosphate-binding residues include K442, R445, and H474. Mg(2+)-binding residues include D481 and D485. The DDXXD 2 signature appears at 481-485 (DDIQD). R490 serves as a coordination point for dimethylallyl diphosphate. Residue R491 participates in isopentenyl diphosphate binding. Residues K568, T569, Q604, N611, K621, and K631 each coordinate dimethylallyl diphosphate.

The protein in the N-terminal section; belongs to the terpene synthase family. It in the C-terminal section; belongs to the FPP/GGPP synthase family. As to quaternary structure, hexamer. The cofactor is Mg(2+).

It carries out the reaction isopentenyl diphosphate + (2E,6E)-farnesyl diphosphate = (2E,6E,10E)-geranylgeranyl diphosphate + diphosphate. The catalysed reaction is isopentenyl diphosphate + (2E,6E,10E)-geranylgeranyl diphosphate = (2E,6E,10E,14E)-geranylfarnesyl diphosphate + diphosphate. It functions in the pathway secondary metabolite biosynthesis; terpenoid biosynthesis. Its function is as follows. Bifunctional terpene synthase; part of the gene cluster that mediates the biosynthesis of betaestacins. The bifunctional terpene synthase btcA converts isopentenyl diphosphate (IPP) and dimethylallyl diphosphate (DMAPP) into the sesterterpene betaestacin I. The C-terminal prenyltransferase (PT) domain of btcA catalyzes formation of GFPP, whereas the N-terminal terpene cyclase (TC) domain catalyzes the cyclization of GFPP into betaestacin I. The cytochrome P450 monooxygenase btcB is then responsible for the six-step oxidation of betaestacin I to yield betaestacin II. The roles of the cytochrome P450 monooxygenase btcC and the alpha-ketoglutarate-dependent dioxygenase btcD have not been identified yet. In Neocamarosporium betae (Beet black rot fungus), this protein is Sesterterpene synthase btcA.